Consider the following 239-residue polypeptide: Prolyl hydroxylase EGLN3 (239 aa).

The tract at residues 62 to 73 (AGPRAGVSKRHL) is beta(2)beta(3) 'finger-like' loop. The segment at 88–104 (CEAISFLLSLIDRLVLY) is required for interaction with ADRB2. The Fe2OG dioxygenase domain maps to 116 to 214 (ERSKAMVACY…RYAMTVWYFD (99 aa)). 3 residues coordinate Fe cation: histidine 135, aspartate 137, and histidine 196. Arginine 205 contributes to the 2-oxoglutarate binding site.

In terms of assembly, interacts with BCL2 (via its BH4 domain); the interaction disrupts the BAX-BCL4 complex inhibiting the anti-apoptotic activity of BCL2. Interacts with WDR83; the interaction leads to almost complete elimination of HIF-mediated reporter activity. Interacts with ADRB2; the interaction hydroxylates ADRB2 facilitating its ubiquitination by the VHL-E3 ligase complex. Interacts with PAX2; the interaction targets PAX2 for destruction. Interacts with PKM; the interaction hydroxylates PKM in hypoxia. Interacts with LIMD1, WTIP and AJUBA. It depends on Fe(2+) as a cofactor. The cofactor is L-ascorbate. In terms of processing, ubiquitinated by SIAH1 and/or SIAH2 in response to the unfolded protein response (UPR), leading to its degradation. As to expression, widely expressed at low levels. Expressed at higher levels in adult heart (cardiac myocytes, aortic endothelial cells and coronary artery smooth muscle), lung and placenta, and in fetal spleen, heart and skeletal muscle. Also expressed in pancreas. Localized to pancreatic acini and islet cells.

The protein localises to the nucleus. The protein resides in the cytoplasm. It catalyses the reaction L-prolyl-[protein] + 2-oxoglutarate + O2 = trans-4-hydroxy-L-prolyl-[protein] + succinate + CO2. The catalysed reaction is L-prolyl-[hypoxia-inducible factor alpha subunit] + 2-oxoglutarate + O2 = trans-4-hydroxy-L-prolyl-[hypoxia-inducible factor alpha subunit] + succinate + CO2. With respect to regulation, activated in cardiovascular cells and Hela cells following exposure to hypoxia. Inhibited by polynitrogen compounds probably by chelation to Fe(2+) ions. Its function is as follows. Prolyl hydroxylase that mediates hydroxylation of proline residues in target proteins, such as PKM, TELO2, ATF4 and HIF1A. Target proteins are preferentially recognized via a LXXLAP motif. Cellular oxygen sensor that catalyzes, under normoxic conditions, the post-translational formation of 4-hydroxyproline in hypoxia-inducible factor (HIF) alpha proteins. Hydroxylates a specific proline found in each of the oxygen-dependent degradation (ODD) domains (N-terminal, NODD, and C-terminal, CODD) of HIF1A. Also hydroxylates HIF2A. Has a preference for the CODD site for both HIF1A and HIF2A. Hydroxylation on the NODD site by EGLN3 appears to require prior hydroxylation on the CODD site. Hydroxylated HIFs are then targeted for proteasomal degradation via the von Hippel-Lindau ubiquitination complex. Under hypoxic conditions, the hydroxylation reaction is attenuated allowing HIFs to escape degradation resulting in their translocation to the nucleus, heterodimerization with HIF1B, and increased expression of hypoxy-inducible genes. ELGN3 is the most important isozyme in limiting physiological activation of HIFs (particularly HIF2A) in hypoxia. Also hydroxylates PKM in hypoxia, limiting glycolysis. Under normoxia, hydroxylates and regulates the stability of ADRB2. Regulator of cardiomyocyte and neuronal apoptosis. In cardiomyocytes, inhibits the anti-apoptotic effect of BCL2 by disrupting the BAX-BCL2 complex. In neurons, has a NGF-induced proapoptotic effect, probably through regulating CASP3 activity. Also essential for hypoxic regulation of neutrophilic inflammation. Plays a crucial role in DNA damage response (DDR) by hydroxylating TELO2, promoting its interaction with ATR which is required for activation of the ATR/CHK1/p53 pathway. Also mediates hydroxylation of ATF4, leading to decreased protein stability of ATF4. The polypeptide is Prolyl hydroxylase EGLN3 (Homo sapiens (Human)).